The chain runs to 1159 residues: Reverse gyrase 2 (1159 aa).

An RG N-terminal-type zinc finger spans residues 1-40 (MALELIERGCPNCGGVISSDRLEKGLPCSKCLPKPTEEKV). Residues cysteine 10, cysteine 13, cysteine 28, and cysteine 31 each coordinate Zn(2+). Residues glutamine 82 and 99-106 (APTGVGKT) each bind ATP. In terms of domain architecture, Helicase ATP-binding spans 86–275 (AKRVFMNQSF…LFRNLLGFDV (190 aa)). Residues 196-199 (DDID) carry the DEAD box motif. Positions 583 to 1159 (DLFKTTLVIV…LLKEEKAFKK (577 aa)) are topoisomerase I. Positions 587-743 (TTLVIVESPN…NIKRAEFHEV (157 aa)) constitute a Toprim domain. Residues glutamate 593 and aspartate 712 each coordinate Mg(2+). Residues 759–1152 (DLNLVKAQLV…EVHRIKVLLK (394 aa)) enclose the Topo IA-type catalytic domain. Tyrosine 902 (O-(5'-phospho-DNA)-tyrosine intermediate) is an active-site residue.

This sequence in the N-terminal section; belongs to the DEAD box helicase family. DDVD subfamily. The protein in the C-terminal section; belongs to the type IA topoisomerase family. As to quaternary structure, monomer. Zn(2+) is required as a cofactor. Requires Mg(2+) as cofactor.

Its subcellular location is the cytoplasm. The enzyme catalyses ATP + H2O = ADP + phosphate + H(+). Functionally, modifies the topological state of DNA by introducing positive supercoils in an ATP-dependent process, increasing the linking number in steps of +1. Binds to single-stranded DNA, transiently cleaves and then rejoins the ends, introducing a positive supercoil in the process. The scissile phosphodiester is attacked by the catalytic tyrosine of the enzyme, resulting in the formation of a DNA-(5'-phosphotyrosyl)-enzyme intermediate. Probably involved in rewinding DNA strands in regions of the chromosome that have opened up to allow replication, transcription, DNA repair and/or for DNA protection. This Aquifex aeolicus (strain VF5) protein is Reverse gyrase 2.